A 122-amino-acid polypeptide reads, in one-letter code: MSVKVEKKTDSYLKDTIQKLLERSRESGSVFWRDIAIRLSSSRKNYATVNLGKLQRIASDDDIIVIPGYLLSSGVFNKKIKVSAFKISEKALKKLNDAGSEFVNLVDLASENPKGTNIKIIR.

This sequence belongs to the eukaryotic ribosomal protein eL18 family.

This Picrophilus torridus (strain ATCC 700027 / DSM 9790 / JCM 10055 / NBRC 100828 / KAW 2/3) protein is Large ribosomal subunit protein eL18.